A 102-amino-acid polypeptide reads, in one-letter code: Large ribosomal subunit protein uL24 (102 aa).

This sequence belongs to the universal ribosomal protein uL24 family. As to quaternary structure, part of the 50S ribosomal subunit.

One of two assembly initiator proteins, it binds directly to the 5'-end of the 23S rRNA, where it nucleates assembly of the 50S subunit. Functionally, one of the proteins that surrounds the polypeptide exit tunnel on the outside of the subunit. The sequence is that of Large ribosomal subunit protein uL24 from Macrococcus caseolyticus (strain JCSC5402) (Macrococcoides caseolyticum).